The following is a 61-amino-acid chain: Probable tautomerase SSP1389 (61 aa).

The active-site Proton acceptor; via imino nitrogen is the Pro-2.

This sequence belongs to the 4-oxalocrotonate tautomerase family.

The sequence is that of Probable tautomerase SSP1389 from Staphylococcus saprophyticus subsp. saprophyticus (strain ATCC 15305 / DSM 20229 / NCIMB 8711 / NCTC 7292 / S-41).